A 165-amino-acid chain; its full sequence is Pyruvoyl-dependent arginine decarboxylase (165 aa).

At Ser-53 the chain carries Pyruvic acid (Ser).

The protein belongs to the PdaD family. Requires pyruvate as cofactor.

It catalyses the reaction L-arginine + H(+) = agmatine + CO2. The protein is Pyruvoyl-dependent arginine decarboxylase of Methanococcus aeolicus (strain ATCC BAA-1280 / DSM 17508 / OCM 812 / Nankai-3).